Here is an 820-residue protein sequence, read N- to C-terminus: Probable beta-glucosidase ARB_05654 (820 aa).

The first 18 residues, 1–18 (MLFRWCPLVALAIASGTA), serve as a signal peptide directing secretion. N-linked (GlcNAc...) asparagine glycans are attached at residues asparagine 62 and asparagine 276. The active site involves aspartate 304. N-linked (GlcNAc...) asparagine glycans are attached at residues asparagine 339, asparagine 346, asparagine 465, asparagine 547, asparagine 566, asparagine 588, and asparagine 811.

The protein belongs to the glycosyl hydrolase 3 family.

It is found in the secreted. The enzyme catalyses Hydrolysis of terminal, non-reducing beta-D-glucosyl residues with release of beta-D-glucose.. It participates in glycan metabolism; cellulose degradation. Beta-glucosidases are one of a number of cellulolytic enzymes involved in the degradation of cellulosic biomass. Catalyzes the last step releasing glucose from the inhibitory cellobiose. The protein is Probable beta-glucosidase ARB_05654 of Arthroderma benhamiae (strain ATCC MYA-4681 / CBS 112371) (Trichophyton mentagrophytes).